A 397-amino-acid chain; its full sequence is Sexual differentiation process protein isp7 (397 aa).

In terms of domain architecture, Fe2OG dioxygenase spans 255–353; sequence PTTSIRLLRY…RYTIPFFLQG (99 aa).

It belongs to the iron/ascorbate-dependent oxidoreductase family.

The sequence is that of Sexual differentiation process protein isp7 (isp7) from Schizosaccharomyces pombe (strain 972 / ATCC 24843) (Fission yeast).